Here is a 424-residue protein sequence, read N- to C-terminus: Fasciclin-like arabinogalactan protein 1 (424 aa).

The N-terminal stretch at 1–24 is a signal peptide; it reads MAKKMSSLIIIFNILLLLTTQTHA. 2 consecutive FAS1 domains span residues 25 to 170 and 184 to 323; these read HNVT…SRVL and EMNL…DKVL. N-linked (GlcNAc...) asparagine glycosylation is found at Asn26, Asn128, Asn160, Asn186, and Asn240. The interval 338–393 is disordered; sequence APAPAPEDGDVADSPKAAKGKAKGKKKKAAPSPDNDPFGDSDSPAEGPDGEADDAT. Positions 355-366 are enriched in basic residues; sequence AKGKAKGKKKKA. The GPI-anchor amidated aspartate moiety is linked to residue Asp396. A propeptide spans 397-424 (removed in mature form); that stretch reads AGAVRIIGGAKAGLVVSLLCLFASSWLL.

This sequence belongs to the fasciclin-like AGP family. In terms of tissue distribution, preferentially expressed in flowers.

Its subcellular location is the secreted. The protein localises to the extracellular space. The protein resides in the apoplast. It localises to the cell membrane. May be a cell surface adhesion protein. This Arabidopsis thaliana (Mouse-ear cress) protein is Fasciclin-like arabinogalactan protein 1 (FLA1).